Reading from the N-terminus, the 106-residue chain is Large ribosomal subunit protein uL24 (106 aa).

The protein belongs to the universal ribosomal protein uL24 family. Part of the 50S ribosomal subunit.

In terms of biological role, one of two assembly initiator proteins, it binds directly to the 5'-end of the 23S rRNA, where it nucleates assembly of the 50S subunit. Functionally, one of the proteins that surrounds the polypeptide exit tunnel on the outside of the subunit. The sequence is that of Large ribosomal subunit protein uL24 from Acidithiobacillus ferrooxidans (strain ATCC 53993 / BNL-5-31) (Leptospirillum ferrooxidans (ATCC 53993)).